Reading from the N-terminus, the 348-residue chain is Terpene cyclase ctvD (348 aa).

Residues 2–22 (ALSAYFLLCLSVLGLDAIYGF) form a helical membrane-spanning segment. Residue Asn51 is glycosylated (N-linked (GlcNAc...) asparagine). Helical transmembrane passes span 77-97 (PGLS…WVAI), 116-136 (LFAM…WCAI), 161-181 (LIPI…LLPE), 191-211 (QIAI…HWGL), 235-255 (FAFV…LTLI), 283-303 (GLWF…LWAM), and 323-343 (LKVG…WLLW).

It belongs to the membrane-bound ascI terpene cyclase family.

Its subcellular location is the membrane. Its pathway is mycotoxin biosynthesis. Its function is as follows. Hydrolase; part of the gene cluster that mediates the biosynthesis of citreoviridin, an inhibitor of the of F1-ATPase beta-subunit. The HR-PKS ctvA accepts acetyl-CoA as the starter unit and catalyzes eight iterations of malonyl-CoA extension and four iterations of SAM-dependent methylation at C4, C12, C14, and C16. The KR and DH domains selectively act on the first six iterations to generate the hexaene chain. In the last three iterations, the KR and DH domains terminate their functions to yield a beta,delta-diketo ester moiety, which then undergoes intramolecular cyclization to yield an alpha-pyrone intermediate. Subsequently, ctvB methylates the alpha-pyrone hydroxyl group to generate citreomontanin. In order to form the tetrahydrofuran ring with the correct stereochemistry, the terminal alkenes of citreomontanin need to undergo isomerization to yield a (17Z)-hexaene, a step that could be catalyzed by ctvC. The (17Z)-hexaene then undergoes bisepoxidation by ctvC to form a (17R,16R,15S,14R)-bisepoxide moiety. Lastly, ctvD acts as a regioselective hydrolase to form the tetrahydrofuran ring with the substituents in the correct absolute configuration, completing the biosynthesis of citreoviridin. In Aspergillus terreus (strain NIH 2624 / FGSC A1156), this protein is Terpene cyclase ctvD.